The primary structure comprises 336 residues: Dihydroorotate dehydrogenase (quinone) (336 aa).

Residues 62–66 (AGLDK) and threonine 86 each bind FMN. Position 66 (lysine 66) interacts with substrate. Position 111–115 (111–115 (NRMGF)) interacts with substrate. Residues asparagine 139 and asparagine 172 each coordinate FMN. Asparagine 172 provides a ligand contact to substrate. Serine 175 acts as the Nucleophile in catalysis. Asparagine 177 contacts substrate. Positions 217 and 245 each coordinate FMN. 246 to 247 (NT) provides a ligand contact to substrate. FMN contacts are provided by residues glycine 268, glycine 297, and 318–319 (YS).

The protein belongs to the dihydroorotate dehydrogenase family. Type 2 subfamily. As to quaternary structure, monomer. It depends on FMN as a cofactor.

The protein localises to the cell membrane. The enzyme catalyses (S)-dihydroorotate + a quinone = orotate + a quinol. It participates in pyrimidine metabolism; UMP biosynthesis via de novo pathway; orotate from (S)-dihydroorotate (quinone route): step 1/1. Catalyzes the conversion of dihydroorotate to orotate with quinone as electron acceptor. This chain is Dihydroorotate dehydrogenase (quinone), found in Cronobacter sakazakii (strain ATCC BAA-894) (Enterobacter sakazakii).